Here is a 474-residue protein sequence, read N- to C-terminus: Protein nucleotidyltransferase YdiU (474 aa).

Residues G89, G91, R92, K112, D124, G125, R178, and R185 each contribute to the ATP site. D262 functions as the Proton acceptor in the catalytic mechanism. Residues N263 and D272 each coordinate Mg(2+). D272 serves as a coordination point for ATP.

The protein belongs to the SELO family. Mg(2+) is required as a cofactor. Requires Mn(2+) as cofactor.

It catalyses the reaction L-seryl-[protein] + ATP = 3-O-(5'-adenylyl)-L-seryl-[protein] + diphosphate. The catalysed reaction is L-threonyl-[protein] + ATP = 3-O-(5'-adenylyl)-L-threonyl-[protein] + diphosphate. It carries out the reaction L-tyrosyl-[protein] + ATP = O-(5'-adenylyl)-L-tyrosyl-[protein] + diphosphate. The enzyme catalyses L-histidyl-[protein] + UTP = N(tele)-(5'-uridylyl)-L-histidyl-[protein] + diphosphate. It catalyses the reaction L-seryl-[protein] + UTP = O-(5'-uridylyl)-L-seryl-[protein] + diphosphate. The catalysed reaction is L-tyrosyl-[protein] + UTP = O-(5'-uridylyl)-L-tyrosyl-[protein] + diphosphate. Its function is as follows. Nucleotidyltransferase involved in the post-translational modification of proteins. It can catalyze the addition of adenosine monophosphate (AMP) or uridine monophosphate (UMP) to a protein, resulting in modifications known as AMPylation and UMPylation. The chain is Protein nucleotidyltransferase YdiU from Trichodesmium erythraeum (strain IMS101).